Consider the following 145-residue polypeptide: MNGRVDYLVTEEEINLTRGPSGLGFNIVGGTDQQYVSNDSGIYVSRIKEDGAAAQDGRLQEGDKILSVNGQDLKNLLHQDAVDLFRNAGCAVSLRVQHRLPVQNGPIVHRGEGEPSGVPVAMVLLPVFALTMVAVWAFVRYRKQL.

The Cytoplasmic portion of the chain corresponds to 1–117; the sequence is MNGRVDYLVT…VHRGEGEPSG (117 aa). Positions 13 to 100 constitute a PDZ domain; that stretch reads EINLTRGPSG…AVSLRVQHRL (88 aa). The chain crosses the membrane as a helical; Anchor for type IV membrane protein span at residues 118–138; that stretch reads VPVAMVLLPVFALTMVAVWAF. Residues 139–145 lie on the Mitochondrial intermembrane side of the membrane; the sequence is VRYRKQL.

Binds (via the PDZ domain) to isoform 2A of SYNJ2 (via the unique motif in the C-terminus). Interacts (via C-terminus) with RALBP1. Interacts (via PDZ domain) with ACVR2A (via C-terminus) and ACVR2B (via C-terminus). Forms a ternary complex with ACVR2A and RALBP1. Interacts with MAPK12. Interacts with DLL1; enhances DLL1 protein stability, and promotes notch signaling in endothelial cells. Isoform 1 and isoform 2 are widely expressed, notably in brain, heart, lung, liver, kidney, skeletal muscle, ovary and testis. Isoform 3 is detected only in heart, spleen and testis.

It is found in the mitochondrion outer membrane. Its subcellular location is the cytoplasm. It localises to the perinuclear region. Its function is as follows. Isoform 1 regulates endocytosis of activin type 2 receptor kinases through the Ral/RALBP1-dependent pathway and may be involved in suppression of activin-induced signal transduction. Isoform 2 and isoform 3 show a stimulatory affect on activin-induced signal transduction and enhance activin type 2 expression at the cell surface. This is Synaptojanin-2-binding protein from Mus musculus (Mouse).